Consider the following 576-residue polypeptide: MDIKLLYRLIKYLKFYKKDLIIVMISLLSVSASLLLIGSVFRNLVDNGLSQNHILSVDKSILYICLLIIILSIASFFRSYFINNVAEKAVNQIRKDAYSNLITYEIEEFEELKIGDIISRLTNDIDQISTLIVNFLSFFIRNSVMLIGGVTLMFFESFKLASIVIITIPILLIPLIKFGKHVKALSKKALESKSLLASDIDETFNNIRAIYAFNNQTNKITDFDTKLQNYLTYCKTRLKIRALFFAISIAIIFLAITLVVWIGASDIVKGNLSAGQIISFIYYAIIAGFSSGGIFELLSEIHLPLAALERIITIIDKTPITHNSYLELNNSDPISIEFKNVDFTYHSRPNLRIINNMSLKINADKFIGIVGRSGGGKSTLMQLLLRFYRQESGTILINNQDITLSNPAEIRKLIAYVPQEANIFSGTIKSNIIFGNTQASDDDINEIIKITGIEEFAAKLHDGINAKIGERGVRLSGGQKQRIAIARALLRKPQILLLDEAMSALDTMSEQKLLESIKEIMKGKIIISIAHRISSIESADYILVIDKGGVAASGSHNDLSKNSEIYRNICREQLTV.

The 284-residue stretch at 20–303 (LIIVMISLLS…IFELLSEIHL (284 aa)) folds into the ABC transmembrane type-1 domain. 6 helical membrane-spanning segments follow: residues 21–41 (IIVMISLLSVSASLLLIGSVF), 61–81 (ILYICLLIIILSIASFFRSYF), 135–155 (FLSFFIRNSVMLIGGVTLMFF), 158–178 (FKLASIVIITIPILLIPLIKF), 242–262 (ALFFAISIAIIFLAITLVVWI), and 277–297 (IISFIYYAIIAGFSSGGIFEL). In terms of domain architecture, ABC transporter spans 336-572 (IEFKNVDFTY…SEIYRNICRE (237 aa)). Position 371–378 (371–378 (GRSGGGKS)) interacts with ATP.

Belongs to the ABC transporter superfamily. In terms of assembly, homodimer.

The protein resides in the cell inner membrane. In terms of biological role, part of an ABC transporter complex. Transmembrane domains (TMD) form a pore in the inner membrane and the ATP-binding domain (NBD) is responsible for energy generation. In Rickettsia felis (strain ATCC VR-1525 / URRWXCal2) (Rickettsia azadi), this protein is Putative export ATP-binding/permease protein RF_0214.